The following is an 820-amino-acid chain: Sucrose synthase 2 (820 aa).

Residues 276 to 753 (MVFNVVILSP…GLKRIYEKYT (478 aa)) form a GT-B glycosyltransferase region.

This sequence belongs to the glycosyltransferase 1 family. Plant sucrose synthase subfamily.

It carries out the reaction an NDP-alpha-D-glucose + D-fructose = a ribonucleoside 5'-diphosphate + sucrose + H(+). In terms of biological role, sucrose-cleaving enzyme that provides UDP-glucose and fructose for various metabolic pathways. This chain is Sucrose synthase 2, found in Tulipa gesneriana (Garden tulip).